A 245-amino-acid chain; its full sequence is DNA polymerase sliding clamp 2 (245 aa).

This sequence belongs to the PCNA family. In terms of assembly, homotrimer. The subunits circularize to form a toroid; DNA passes through its center. Replication factor C (RFC) is required to load the toroid on the DNA.

Sliding clamp subunit that acts as a moving platform for DNA processing. Responsible for tethering the catalytic subunit of DNA polymerase and other proteins to DNA during high-speed replication. This Sulfolobus acidocaldarius (strain ATCC 33909 / DSM 639 / JCM 8929 / NBRC 15157 / NCIMB 11770) protein is DNA polymerase sliding clamp 2.